A 539-amino-acid chain; its full sequence is Probable protein kinase UbiB (539 aa).

A helical transmembrane segment spans residues 23–43 (DLLFALPLPWWMLALRFVLPW). Residues 125–492 (RFDEKPLASA…WHDRKDEPVL (368 aa)) enclose the Protein kinase domain. ATP contacts are provided by residues 131–139 (LASASVAQV) and Lys-153. Asp-288 serves as the catalytic Proton acceptor. The next 2 helical transmembrane spans lie at 494–514 (LIGAALLVGGAIQGWVMSEAA) and 517–537 (LLTLTAWPAAIMLIAGLYLIV).

It belongs to the ABC1 family. UbiB subfamily.

It localises to the cell inner membrane. It participates in cofactor biosynthesis; ubiquinone biosynthesis [regulation]. In terms of biological role, is probably a protein kinase regulator of UbiI activity which is involved in aerobic coenzyme Q (ubiquinone) biosynthesis. This chain is Probable protein kinase UbiB, found in Pseudomonas syringae pv. syringae (strain B728a).